A 99-amino-acid polypeptide reads, in one-letter code: Sec-independent protein translocase protein TatA (99 aa).

Residues 1–21 (MIGNLKPLEIVLIIAVILLLF) form a helical membrane-spanning segment. The disordered stretch occupies residues 46–99 (AMKKDDAATAAPTTETVADDTVPPQSTTARTIQAAPGDVTSSRPVSEAKPTTQS). A compositionally biased stretch (low complexity) spans 53–69 (ATAAPTTETVADDTVPP). A compositionally biased stretch (polar residues) spans 84 to 99 (VTSSRPVSEAKPTTQS).

The protein belongs to the TatA/E family. In terms of assembly, the Tat system comprises two distinct complexes: a TatABC complex, containing multiple copies of TatA, TatB and TatC subunits, and a separate TatA complex, containing only TatA subunits. Substrates initially bind to the TatABC complex, which probably triggers association of the separate TatA complex to form the active translocon.

It localises to the cell membrane. In terms of biological role, part of the twin-arginine translocation (Tat) system that transports large folded proteins containing a characteristic twin-arginine motif in their signal peptide across membranes. TatA could form the protein-conducting channel of the Tat system. In Streptomyces griseus subsp. griseus (strain JCM 4626 / CBS 651.72 / NBRC 13350 / KCC S-0626 / ISP 5235), this protein is Sec-independent protein translocase protein TatA.